We begin with the raw amino-acid sequence, 584 residues long: ATP-dependent lipid A-core flippase (584 aa).

5 helical membrane passes run 18–38 (LWPIIFPFRVGLVVASITLIL), 65–85 (VFVWMPLALVGLMGIRGFSGF), 155–175 (IIGLCIMMFYYSWQLSLILVL), 252–272 (IFDPLIQCVASLALAFVLYAA), and 277–297 (VMEMLTAGTITVIFSSMIVLM). One can recognise an ABC transmembrane type-1 domain in the interval 30–312 (VVASITLILN…LTNVSAQFQR (283 aa)). The ABC transporter domain occupies 344-580 (IIFDDVTFFY…QGIYAQLYKL (237 aa)). ATP is bound at residue 378–385 (GRSGSGKS).

This sequence belongs to the ABC transporter superfamily. Lipid exporter (TC 3.A.1.106) family. As to quaternary structure, homodimer.

Its subcellular location is the cell inner membrane. It catalyses the reaction ATP + H2O + lipid A-core oligosaccharideSide 1 = ADP + phosphate + lipid A-core oligosaccharideSide 2.. Involved in lipopolysaccharide (LPS) biosynthesis. Translocates lipid A-core from the inner to the outer leaflet of the inner membrane. Transmembrane domains (TMD) form a pore in the inner membrane and the ATP-binding domain (NBD) is responsible for energy generation. This is ATP-dependent lipid A-core flippase from Blochmanniella pennsylvanica (strain BPEN).